A 974-amino-acid chain; its full sequence is Translation initiation factor IF-2 (974 aa).

Positions 31 to 376 (FVKSASSTVE…APAVGGVRLP (346 aa)) are disordered. Over residues 52–68 (PSAKSADSAARPAAKPG) the composition is skewed to low complexity. The span at 83–96 (GPRPGPKPAAPAPA) shows a compositional bias: pro residues. A compositionally biased stretch (low complexity) spans 97–133 (APAAAAPAATPAAQAPAPAAPAASTATPAAPASNAPK). Positions 134–147 (PGRPTPAAPAPAAP) are enriched in pro residues. Composition is skewed to low complexity over residues 148 to 166 (AAPA…STGA) and 179 to 191 (RVGN…APAE). 2 stretches are compositionally biased toward pro residues: residues 195–210 (PRPA…PRPA) and 253–266 (RPSP…PNPG). Over residues 267–277 (AMPARSARPAP) the composition is skewed to low complexity. Over residues 279–332 (GRPGRPGGAPGGRPGGGGGGYRGGGAPGAGAGAPGGGAPAGGFRGRPGGGGRPG) the composition is skewed to gly residues. Residues 349–358 (RRGRKSKRQK) show a composition bias toward basic residues. Residues 470-641 (SRPPVVTVMG…AVLLTADAAL (172 aa)) enclose the tr-type G domain. The tract at residues 479-486 (GHVDHGKT) is G1. A GTP-binding site is contributed by 479–486 (GHVDHGKT). Residues 504-508 (GITQH) are G2. Positions 529-532 (DTPG) are G3. Residues 529-533 (DTPGH) and 583-586 (NKID) each bind GTP. The interval 583–586 (NKID) is G4. The segment at 619 to 621 (SAK) is G5.

This sequence belongs to the TRAFAC class translation factor GTPase superfamily. Classic translation factor GTPase family. IF-2 subfamily.

It is found in the cytoplasm. In terms of biological role, one of the essential components for the initiation of protein synthesis. Protects formylmethionyl-tRNA from spontaneous hydrolysis and promotes its binding to the 30S ribosomal subunits. Also involved in the hydrolysis of GTP during the formation of the 70S ribosomal complex. This chain is Translation initiation factor IF-2, found in Rhodococcus opacus (strain B4).